The following is a 261-amino-acid chain: Small ribosomal subunit protein uS2 (261 aa).

Serine 2 is subject to N-acetylserine. The segment at 214 to 261 is disordered; sequence ATEDIKTDDVEEAPAADAETEWTGETEEVDWAESGATPAAEEAAASNW. Over residues 222-244 the composition is skewed to acidic residues; the sequence is DVEEAPAADAETEWTGETEEVDW. Residues 245 to 261 are compositionally biased toward low complexity; it reads AESGATPAAEEAAASNW.

The protein belongs to the universal ribosomal protein uS2 family. In terms of assembly, component of the small ribosomal subunit. Mature ribosomes consist of a small (40S) and a large (60S) subunit. The 40S subunit contains about 33 different proteins and 1 molecule of RNA (18S). The 60S subunit contains about 49 different proteins and 3 molecules of RNA (25S, 5.8S and 5S). Interacts with RPS21.

Its subcellular location is the cytoplasm. Functionally, required for the assembly and/or stability of the 40S ribosomal subunit. Required for the processing of the 20S rRNA-precursor to mature 18S rRNA in a late step of the maturation of 40S ribosomal subunits. This chain is Small ribosomal subunit protein uS2, found in Debaryomyces hansenii (strain ATCC 36239 / CBS 767 / BCRC 21394 / JCM 1990 / NBRC 0083 / IGC 2968) (Yeast).